The sequence spans 327 residues: Phospho-N-acetylmuramoyl-pentapeptide-transferase (327 aa).

Transmembrane regions (helical) follow at residues 3 to 23, 51 to 71, 75 to 95, 115 to 135, 140 to 160, 172 to 192, 197 to 217, 223 to 243, 248 to 268, and 306 to 326; these read IALIAGIVTFILTIIGIPAFI, TMGGTVFLLTSVLASFVIGLF, LSNGLIMILFILVLYGVVGFL, LFLQLVGGVVFYFFYNQHGAG, IFTVPVQLGFLYVFFVLFWLI, IDGLASISVVISLVAYAVIAV, FDILIVIISMIGGLLGFFVFN, IFMGDVGSLALGGMLAAISIS, WTLLLIGIVYVFETTSVMMQV, and VDFFFWGIGIVGSLLTLAILY.

It belongs to the glycosyltransferase 4 family. MraY subfamily. Mg(2+) is required as a cofactor.

It is found in the cell membrane. The catalysed reaction is UDP-N-acetyl-alpha-D-muramoyl-L-alanyl-gamma-D-glutamyl-L-lysyl-D-alanyl-D-alanine + di-trans,octa-cis-undecaprenyl phosphate = Mur2Ac(oyl-L-Ala-gamma-D-Glu-L-Lys-D-Ala-D-Ala)-di-trans,octa-cis-undecaprenyl diphosphate + UMP. The protein operates within cell wall biogenesis; peptidoglycan biosynthesis. Catalyzes the initial step of the lipid cycle reactions in the biosynthesis of the cell wall peptidoglycan: transfers peptidoglycan precursor phospho-MurNAc-pentapeptide from UDP-MurNAc-pentapeptide onto the lipid carrier undecaprenyl phosphate, yielding undecaprenyl-pyrophosphoryl-MurNAc-pentapeptide, known as lipid I. This Streptococcus sanguinis (strain SK36) protein is Phospho-N-acetylmuramoyl-pentapeptide-transferase.